A 499-amino-acid chain; its full sequence is Bifunctional purine biosynthesis protein PurH (499 aa).

Residues Met1 to Thr144 form the MGS-like domain.

This sequence belongs to the PurH family.

It catalyses the reaction (6R)-10-formyltetrahydrofolate + 5-amino-1-(5-phospho-beta-D-ribosyl)imidazole-4-carboxamide = 5-formamido-1-(5-phospho-D-ribosyl)imidazole-4-carboxamide + (6S)-5,6,7,8-tetrahydrofolate. The catalysed reaction is IMP + H2O = 5-formamido-1-(5-phospho-D-ribosyl)imidazole-4-carboxamide. It functions in the pathway purine metabolism; IMP biosynthesis via de novo pathway; 5-formamido-1-(5-phospho-D-ribosyl)imidazole-4-carboxamide from 5-amino-1-(5-phospho-D-ribosyl)imidazole-4-carboxamide (10-formyl THF route): step 1/1. It participates in purine metabolism; IMP biosynthesis via de novo pathway; IMP from 5-formamido-1-(5-phospho-D-ribosyl)imidazole-4-carboxamide: step 1/1. This chain is Bifunctional purine biosynthesis protein PurH, found in Clostridium botulinum (strain Hall / ATCC 3502 / NCTC 13319 / Type A).